We begin with the raw amino-acid sequence, 486 residues long: Maintenance of mitochondrial morphology protein 1 (486 aa).

Residues 1–23 are Lumenal-facing; sequence MSQHSQYDAPGVPVQPSLSFTQG. Residues 24 to 44 traverse the membrane as a helical segment; it reads FLLGQLSVVLLIGAFIKFFIF. Residues 45-486 are Cytoplasmic-facing; it reads GEAPAPPSRG…PGSMPGGRAQ (442 aa). Residues 52-103 form a disordered region; the sequence is SRGLASRTASHHRSYSINQGDNNVSNNNTSGGSPRTLCEKPSTSNVLRPVPS. The segment covering 67–84 has biased composition (low complexity); the sequence is SINQGDNNVSNNNTSGGS. Over residues 92–103 the composition is skewed to polar residues; that stretch reads PSTSNVLRPVPS. The SMP-LTD domain maps to 140–389; it reads QPESLDWFNV…EPRVQVVGLP (250 aa). A compositionally biased stretch (low complexity) spans 413–426; sequence AAASASSRGGAPEA. The interval 413–486 is disordered; that stretch reads AAASASSRGG…PGSMPGGRAQ (74 aa).

It belongs to the MMM1 family. As to quaternary structure, homodimer. Component of the ER-mitochondria encounter structure (ERMES) or MDM complex, composed of mmm1, mdm10, mdm12 and mdm34. A mmm1 homodimer associates with one molecule of mdm12 on each side in a pairwise head-to-tail manner, and the SMP-LTD domains of mmm1 and mdm12 generate a continuous hydrophobic tunnel for phospholipid trafficking.

Its subcellular location is the endoplasmic reticulum membrane. Component of the ERMES/MDM complex, which serves as a molecular tether to connect the endoplasmic reticulum (ER) and mitochondria. Components of this complex are involved in the control of mitochondrial shape and protein biogenesis, and function in nonvesicular lipid trafficking between the ER and mitochondria. The mdm12-mmm1 subcomplex functions in the major beta-barrel assembly pathway that is responsible for biogenesis of all outer membrane beta-barrel proteins, and acts in a late step after the SAM complex. The mdm10-mdm12-mmm1 subcomplex further acts in the TOM40-specific pathway after the action of the mdm12-mmm1 complex. Essential for establishing and maintaining the structure of mitochondria and maintenance of mtDNA nucleoids. The protein is Maintenance of mitochondrial morphology protein 1 of Talaromyces marneffei (strain ATCC 18224 / CBS 334.59 / QM 7333) (Penicillium marneffei).